We begin with the raw amino-acid sequence, 172 residues long: Adenylate kinase isoenzyme 6 (172 aa).

Residues glycine 13, glycine 15, lysine 16, threonine 17, and threonine 18 each coordinate ATP. Residues 33 to 56 (NVGDLAREGHLYDGYDEEYGCPIL) are NMPbind. The segment at 108-118 (TRGYHEKKLQD) is LID. Arginine 109 contacts ATP.

It belongs to the adenylate kinase family. AK6 subfamily. In terms of assembly, monomer and homodimer. Interacts with small ribosomal subunit protein uS11. Not a structural component of 43S pre-ribosomes, but transiently interacts with them by binding to uS11. Interacts with COIL (via C-terminus).

It is found in the cytoplasm. The protein localises to the nucleus. Its subcellular location is the nucleoplasm. It localises to the cajal body. The catalysed reaction is AMP + ATP = 2 ADP. It carries out the reaction ATP + H2O = ADP + phosphate + H(+). In terms of biological role, broad-specificity nucleoside monophosphate (NMP) kinase that catalyzes the reversible transfer of the terminal phosphate group between nucleoside triphosphates and monophosphates. Also has ATPase activity. Involved in the late cytoplasmic maturation steps of the 40S ribosomal particles, specifically 18S rRNA maturation. While NMP activity is not required for ribosome maturation, ATPase activity is. Associates transiently with small ribosomal subunit protein uS11. ATP hydrolysis breaks the interaction with uS11. May temporarily remove uS11 from the ribosome to enable a conformational change of the ribosomal RNA that is needed for the final maturation step of the small ribosomal subunit. Its NMP activity may have a role in nuclear energy homeostasis. May be involved in regulation of Cajal body (CB) formation. In Rattus norvegicus (Rat), this protein is Adenylate kinase isoenzyme 6.